We begin with the raw amino-acid sequence, 172 residues long: Large ribosomal subunit protein uL5 (172 aa).

The protein belongs to the universal ribosomal protein uL5 family. In terms of assembly, component of the large ribosomal subunit.

It localises to the nucleus. The protein resides in the cytoplasm. Component of the ribosome, a large ribonucleoprotein complex responsible for the synthesis of proteins in the cell. The small ribosomal subunit (SSU) binds messenger RNAs (mRNAs) and translates the encoded message by selecting cognate aminoacyl-transfer RNA (tRNA) molecules. The large subunit (LSU) contains the ribosomal catalytic site termed the peptidyl transferase center (PTC), which catalyzes the formation of peptide bonds, thereby polymerizing the amino acids delivered by tRNAs into a polypeptide chain. The nascent polypeptides leave the ribosome through a tunnel in the LSU and interact with protein factors that function in enzymatic processing, targeting, and the membrane insertion of nascent chains at the exit of the ribosomal tunnel. The protein is Large ribosomal subunit protein uL5 (RPL11) of Tetrahymena thermophila.